The following is a 208-amino-acid chain: Small ribosomal subunit protein uS4 (208 aa).

The region spanning 95–159 is the S4 RNA-binding domain; it reads RRIDNIVYRA…FKKLVRSNIE (65 aa).

It belongs to the universal ribosomal protein uS4 family. As to quaternary structure, part of the 30S ribosomal subunit. Contacts protein S5. The interaction surface between S4 and S5 is involved in control of translational fidelity.

In terms of biological role, one of the primary rRNA binding proteins, it binds directly to 16S rRNA where it nucleates assembly of the body of the 30S subunit. Functionally, with S5 and S12 plays an important role in translational accuracy. The chain is Small ribosomal subunit protein uS4 from Borrelia recurrentis (strain A1).